A 1335-amino-acid polypeptide reads, in one-letter code: Xanthine dehydrogenase/oxidase (1335 aa).

A 2Fe-2S ferredoxin-type domain is found at 7–94 (DELVFFVNGK…HVAVTTVEGI (88 aa)). Residues C46, C51, C54, C76, C115, C118, C150, and C152 each coordinate [2Fe-2S] cluster. In terms of domain architecture, FAD-binding PCMH-type spans 231–416 (FEGERVTWIQ…VSIVIPYSRK (186 aa)). FAD is bound by residues 259–266 (LVVGNTEI), F339, 349–353 (SIGGN), D362, L406, and K424. A disulfide bridge links C538 with C995. Q770 and F801 together coordinate Mo-molybdopterin. Substrate-binding residues include E805 and R883. R915 contacts Mo-molybdopterin. Residues F917 and T1013 each coordinate substrate. Residue A1082 coordinates Mo-molybdopterin. The active-site Proton acceptor is E1264.

Belongs to the xanthine dehydrogenase family. Homodimer. Interacts with BTN1A1. It depends on FAD as a cofactor. Mo-molybdopterin serves as cofactor. Requires [2Fe-2S] cluster as cofactor. In terms of processing, subject to partial proteolysis; this alters the enzyme from the dehydrogenase form (D) to the oxidase form (O). Post-translationally, contains sulfhydryl groups that are easily oxidized (in vitro); this alters the enzyme from the dehydrogenase form (D) to the oxidase form (O).

It is found in the cytoplasm. The protein localises to the peroxisome. Its subcellular location is the secreted. It carries out the reaction xanthine + NAD(+) + H2O = urate + NADH + H(+). The enzyme catalyses hypoxanthine + NAD(+) + H2O = xanthine + NADH + H(+). The catalysed reaction is xanthine + O2 + H2O = urate + H2O2. Its activity is regulated as follows. Can be converted from the dehydrogenase form (D) to the oxidase form (O) irreversibly by proteolysis or reversibly through the oxidation of sulfhydryl groups. Functionally, key enzyme in purine degradation. Catalyzes the oxidation of hypoxanthine to xanthine. Catalyzes the oxidation of xanthine to uric acid. Contributes to the generation of reactive oxygen species. In Mus musculus (Mouse), this protein is Xanthine dehydrogenase/oxidase (Xdh).